Reading from the N-terminus, the 128-residue chain is Pi-hexatoxin-Hi1c (128 aa).

Positions 1–19 (MKLRITLALTSVLAFCVFG) are cleaved as a signal peptide. Residues 20-47 (DKENENLMENLLEDDLLDIFTDAIHMER) constitute a propeptide that is removed on maturation. 6 disulfides stabilise this stretch: Cys54-Cys69, Cys61-Cys74, Cys68-Cys84, Cys93-Cys108, Cys100-Cys113, and Cys107-Cys124. 2 Domain repeats span residues 54 to 84 (CIAK…HEVC) and 93 to 124 (CLEK…HPVC). Positions 54–124 (CIAKWKSCAG…ERRGNKHPVC (71 aa)) are 2 X approximate repeats with cysteine pattern C-C-CC-C-C.

It belongs to the psalmotoxin-1 family. Double-knot toxin subfamily. Expressed by the venom gland.

It is found in the secreted. Functionally, this toxin potently and selectively inhibits ASIC1a, an isoform of the gene ASIC1. It incompletely inhibits ASIC1a activation in a pH-independent and slowly reversible manner. This toxin acts by binding to and stabilizing the closed state of the channel, thereby impeding the transition into a conducting state. This toxin may bind to the acidic pocket of ASIC1a, since mutation of a key residue of this pocket (Arg-350) abolishes the ability of the toxin to inhibit ASIC1a. In vivo, this toxin protects the brain from neuronal injury when administered up to 8 hours after stroke onset. The chain is Pi-hexatoxin-Hi1c from Hadronyche infensa (Fraser island funnel-web spider).